The following is a 246-amino-acid chain: Probable transcriptional regulatory protein GWCH70_2524 (246 aa).

It belongs to the TACO1 family.

Its subcellular location is the cytoplasm. This Geobacillus sp. (strain WCH70) protein is Probable transcriptional regulatory protein GWCH70_2524.